The primary structure comprises 181 residues: Cyclic AMP-dependent transcription factor ATF-3 (181 aa).

The segment at 76–97 is disordered; it reads VTKAEVAPEEDERKKRRRERNK. K78 is covalently cross-linked (Glycyl lysine isopeptide (Lys-Gly) (interchain with G-Cter in SUMO2)). In terms of domain architecture, bZIP spans 86-149; the sequence is DERKKRRRER…QHLIYMLNLH (64 aa). The interval 88-110 is basic motif; it reads RKKRRRERNKIAAAKCRNKKKEK. A leucine-zipper region spans residues 114 to 142; it reads LQKESEKLESVNAELKAQIEELKNEKQHL. At T162 the chain carries Phosphothreonine. Residue K175 forms a Glycyl lysine isopeptide (Lys-Gly) (interchain with G-Cter in SUMO2) linkage.

It belongs to the bZIP family. ATF subfamily. Binds DNA as a homodimer or a heterodimer. Interacts with KAT5; promoting KAT5 autoacetylation and KAT5 deubiquitination by USP7.

It is found in the nucleus. This protein binds the cAMP response element (CRE) (consensus: 5'-GTGACGT[AC][AG]-3'), a sequence present in many viral and cellular promoters. Represses transcription from promoters with ATF sites. It may repress transcription by stabilizing the binding of inhibitory cofactors at the promoter. This Bos taurus (Bovine) protein is Cyclic AMP-dependent transcription factor ATF-3 (ATF3).